The sequence spans 507 residues: ATP synthase subunit alpha, chloroplastic (507 aa).

170 to 177 provides a ligand contact to ATP; the sequence is GDRQTGKT. Threonine 257 bears the Phosphothreonine mark.

It belongs to the ATPase alpha/beta chains family. F-type ATPases have 2 components, CF(1) - the catalytic core - and CF(0) - the membrane proton channel. CF(1) has five subunits: alpha(3), beta(3), gamma(1), delta(1), epsilon(1). CF(0) has four main subunits: a, b, b' and c.

Its subcellular location is the plastid. It is found in the chloroplast thylakoid membrane. It catalyses the reaction ATP + H2O + 4 H(+)(in) = ADP + phosphate + 5 H(+)(out). Produces ATP from ADP in the presence of a proton gradient across the membrane. The alpha chain is a regulatory subunit. The protein is ATP synthase subunit alpha, chloroplastic of Lobularia maritima (Sweet alyssum).